We begin with the raw amino-acid sequence, 473 residues long: MDYLPIFMKIEQQHCLIVGGGTVAARKADLFIKSGAIVTVVAPKLGNEMTFHLAQGKIIWHMNTFSTALVSELPRPSLVISATDDQNVNLAVYKTYHAQDIPVNVADQTEYCDFILPAIVDRSPMTIAISTGGRSPVLARVMKARLETMIPHGFSVLTDLVGRYRQTVKNVISDIDGRKTFWETLLSGLFIDKAVHGNTGEAEALLEAELETIKNNGQSLPQGEVYIIGAGPGDPDLMTFKGLRLLQQADVILYDRLVAPEILEMGRREAERIYVGKKEKWHKMDQKDINQMLVDLARQGKRVARLKGGDPYIFGRGAEEVELLVQHDVPYQVVPGITAAAGCSVYADFPLTHRDYAQSVALITGHQQAGAQGIDYARLAQSGDTMVFYMGIKNAPKIQAGLIAHGLCPDTPAAIIENGTRLNQKVTVTSLAKLSETIQKKSIKPPALLVIGEVIKVRERLQKKSLLDDRVPA.

The segment at 1–206 (MDYLPIFMKI…GNTGEAEALL (206 aa)) is precorrin-2 dehydrogenase /sirohydrochlorin ferrochelatase. NAD(+) contacts are provided by residues 22-23 (TV) and 43-44 (PK). Residues 223–473 (GEVYIIGAGP…KSLLDDRVPA (251 aa)) are uroporphyrinogen-III C-methyltransferase. P232 lines the S-adenosyl-L-methionine pocket. The active-site Proton acceptor is the D255. K277 serves as the catalytic Proton donor. S-adenosyl-L-methionine contacts are provided by residues 308-310 (GGD), I313, 338-339 (TA), M390, and G419.

In the N-terminal section; belongs to the precorrin-2 dehydrogenase / sirohydrochlorin ferrochelatase family. The protein in the C-terminal section; belongs to the precorrin methyltransferase family.

The enzyme catalyses uroporphyrinogen III + 2 S-adenosyl-L-methionine = precorrin-2 + 2 S-adenosyl-L-homocysteine + H(+). It carries out the reaction precorrin-2 + NAD(+) = sirohydrochlorin + NADH + 2 H(+). It catalyses the reaction siroheme + 2 H(+) = sirohydrochlorin + Fe(2+). Its pathway is cofactor biosynthesis; adenosylcobalamin biosynthesis; precorrin-2 from uroporphyrinogen III: step 1/1. The protein operates within cofactor biosynthesis; adenosylcobalamin biosynthesis; sirohydrochlorin from precorrin-2: step 1/1. It functions in the pathway porphyrin-containing compound metabolism; siroheme biosynthesis; precorrin-2 from uroporphyrinogen III: step 1/1. It participates in porphyrin-containing compound metabolism; siroheme biosynthesis; siroheme from sirohydrochlorin: step 1/1. Its pathway is porphyrin-containing compound metabolism; siroheme biosynthesis; sirohydrochlorin from precorrin-2: step 1/1. Multifunctional enzyme that catalyzes the SAM-dependent methylations of uroporphyrinogen III at position C-2 and C-7 to form precorrin-2 via precorrin-1. Then it catalyzes the NAD-dependent ring dehydrogenation of precorrin-2 to yield sirohydrochlorin. Finally, it catalyzes the ferrochelation of sirohydrochlorin to yield siroheme. In Hydrogenovibrio crunogenus (strain DSM 25203 / XCL-2) (Thiomicrospira crunogena), this protein is Siroheme synthase.